The following is a 338-amino-acid chain: Holliday junction branch migration complex subunit RuvB (338 aa).

Residues 1–181 (MTRTITPSIT…FGVISRLEFY (181 aa)) form a large ATPase domain (RuvB-L) region. ATP is bound by residues Leu20, Arg21, Gly62, Lys65, Thr66, Thr67, 128–130 (EDF), Arg171, Tyr181, and Arg218. Residue Thr66 participates in Mg(2+) binding. The interval 182–252 (TDEELAFIIT…VVQDALALLE (71 aa)) is small ATPAse domain (RuvB-S). The tract at residues 255–338 (EMGFDQMDRM…VPEPPQGKLF (84 aa)) is head domain (RuvB-H). DNA-binding residues include Arg310 and Arg315.

It belongs to the RuvB family. In terms of assembly, homohexamer. Forms an RuvA(8)-RuvB(12)-Holliday junction (HJ) complex. HJ DNA is sandwiched between 2 RuvA tetramers; dsDNA enters through RuvA and exits via RuvB. An RuvB hexamer assembles on each DNA strand where it exits the tetramer. Each RuvB hexamer is contacted by two RuvA subunits (via domain III) on 2 adjacent RuvB subunits; this complex drives branch migration. In the full resolvosome a probable DNA-RuvA(4)-RuvB(12)-RuvC(2) complex forms which resolves the HJ.

The protein resides in the cytoplasm. The enzyme catalyses ATP + H2O = ADP + phosphate + H(+). Functionally, the RuvA-RuvB-RuvC complex processes Holliday junction (HJ) DNA during genetic recombination and DNA repair, while the RuvA-RuvB complex plays an important role in the rescue of blocked DNA replication forks via replication fork reversal (RFR). RuvA specifically binds to HJ cruciform DNA, conferring on it an open structure. The RuvB hexamer acts as an ATP-dependent pump, pulling dsDNA into and through the RuvAB complex. RuvB forms 2 homohexamers on either side of HJ DNA bound by 1 or 2 RuvA tetramers; 4 subunits per hexamer contact DNA at a time. Coordinated motions by a converter formed by DNA-disengaged RuvB subunits stimulates ATP hydrolysis and nucleotide exchange. Immobilization of the converter enables RuvB to convert the ATP-contained energy into a lever motion, pulling 2 nucleotides of DNA out of the RuvA tetramer per ATP hydrolyzed, thus driving DNA branch migration. The RuvB motors rotate together with the DNA substrate, which together with the progressing nucleotide cycle form the mechanistic basis for DNA recombination by continuous HJ branch migration. Branch migration allows RuvC to scan DNA until it finds its consensus sequence, where it cleaves and resolves cruciform DNA. This chain is Holliday junction branch migration complex subunit RuvB, found in Geotalea uraniireducens (strain Rf4) (Geobacter uraniireducens).